Here is a 259-residue protein sequence, read N- to C-terminus: Putative deoxyribonuclease TATDN1 homolog (259 aa).

A divalent metal cation contacts are provided by E82, H116, H138, and D186.

It belongs to the metallo-dependent hydrolases superfamily. TatD-type hydrolase family. The cofactor is a divalent metal cation.

It localises to the nucleus. Putative deoxyribonuclease. The chain is Putative deoxyribonuclease TATDN1 homolog from Vairimorpha ceranae (strain BRL01) (Microsporidian parasite).